Reading from the N-terminus, the 376-residue chain is Alpha-ketoglutarate-dependent dioxygenase esdpJ (376 aa).

Positions 145 and 147 each coordinate Fe cation. Thr-202 contributes to the 2-oxoglutarate binding site. Positions 234-260 are disordered; it reads YNQSSQEKKSEIHVEPRGSPNNVGSDL. The span at 239–249 shows a compositional bias: basic and acidic residues; sequence QEKKSEIHVEP. Position 335 (His-335) interacts with Fe cation. 2-oxoglutarate contacts are provided by Arg-347 and Arg-351. The interval 354-376 is disordered; sequence GVGEQPYLDPESKTRREALGEFN. Over residues 363–376 the composition is skewed to basic and acidic residues; it reads PESKTRREALGEFN.

Belongs to the TfdA dioxygenase family. The cofactor is Fe(2+).

Alpha-ketoglutarate-dependent dioxygenas; part of the cluster that mediates the biosynthesis of shearones, diterpenoid pyrones (DPs) which are structurally diverse meroterpenoids consisting of a diterpene linked by a pyrone, and which may exhibit a range of bioactivities. The alpha-ketoglutarate-dependent dioxygenase esdpJ seems not to be involved in this pathway. The molecular scaffold is commonly biosynthesized by a series of enzymes including the non-reducing polyketide synthase (NR-PKS) esdpA that generates an alpha-pyrone; the prenyltransferase esdpC that attaches a geranylgeranyl pyrophosphate (GGPP) produced by the GGPP synthase (GGPPS) esdpD onto the pyrone unit; the FAD-dependent monooxygenase esdpE that converts an olefin on the diterpene unit into an epoxide; and the terpene cyclase esdpB that catalyzes the cyclization reactions to give the molecular backbone shearone A. In the modification steps, esdpF oxidizes the hydroxy group to a ketone at C-3 and esdpG then attaches hydroxy groups at both C-11 and C-12. After that, esdpI hydroxylates at C-20 and esdpH hydroxylates at C-6'. The ether bridge is generated by nucleophilic attack of the hydroxy group at C-20 to the carbonyl carbon at C-3. EsdpH can also functions prior to esdpI. The different combinations of these modification enzymes lead to the production of diverse shearone derivatives, shearone I being the end product of the pathway. This is Alpha-ketoglutarate-dependent dioxygenase esdpJ from Penicillium shearii (Eupenicillium shearii).